Reading from the N-terminus, the 232-residue chain is MSMPFYVAPEQLMKDRADYARKGIARGRALIGAVWEGGIIIVAENPSRSLHKLSEIYDRIAFGGVGKYNEFDQLRVAGIRHADLKGYAYAREDVDARSLANLYAQYLGTVFTHEMKPLEVEILVAELGNGHRESQLFQILYDGTVMDEREFAVLGGDADAIAERFRALYDASGPRERLLQSARDALSGQRPPIGADDLEVVVLEDRGERRCFRRLEVDEVREALGDQPEGSA.

The protein belongs to the peptidase T1A family. The 20S proteasome core is composed of 14 alpha and 14 beta subunits that assemble into four stacked heptameric rings, resulting in a barrel-shaped structure. The two inner rings, each composed of seven catalytic beta subunits, are sandwiched by two outer rings, each composed of seven alpha subunits. The catalytic chamber with the active sites is on the inside of the barrel. Has a gated structure, the ends of the cylinder being occluded by the N-termini of the alpha-subunits. Is capped by the proteasome-associated ATPase, ARC.

Its subcellular location is the cytoplasm. It participates in protein degradation; proteasomal Pup-dependent pathway. The formation of the proteasomal ATPase ARC-20S proteasome complex, likely via the docking of the C-termini of ARC into the intersubunit pockets in the alpha-rings, may trigger opening of the gate for substrate entry. Interconversion between the open-gate and close-gate conformations leads to a dynamic regulation of the 20S proteasome proteolysis activity. Component of the proteasome core, a large protease complex with broad specificity involved in protein degradation. The sequence is that of Proteasome subunit alpha from Acidimicrobium ferrooxidans (strain DSM 10331 / JCM 15462 / NBRC 103882 / ICP).